The chain runs to 377 residues: Queuine tRNA-ribosyltransferase (377 aa).

Residue D94 is the Proton acceptor of the active site. Substrate contacts are provided by residues 94–98 (DSGGF), D148, Q191, and G218. An RNA binding region spans residues 249–255 (GVGTPDD). Catalysis depends on D268, which acts as the Nucleophile. Residues 273–277 (TRAGR) form an RNA binding; important for wobble base 34 recognition region.

The protein belongs to the queuine tRNA-ribosyltransferase family. As to quaternary structure, homodimer. Within each dimer, one monomer is responsible for RNA recognition and catalysis, while the other monomer binds to the replacement base PreQ1.

The catalysed reaction is 7-aminomethyl-7-carbaguanine + guanosine(34) in tRNA = 7-aminomethyl-7-carbaguanosine(34) in tRNA + guanine. The protein operates within tRNA modification; tRNA-queuosine biosynthesis. In terms of biological role, catalyzes the base-exchange of a guanine (G) residue with the queuine precursor 7-aminomethyl-7-deazaguanine (PreQ1) at position 34 (anticodon wobble position) in tRNAs with GU(N) anticodons (tRNA-Asp, -Asn, -His and -Tyr). Catalysis occurs through a double-displacement mechanism. The nucleophile active site attacks the C1' of nucleotide 34 to detach the guanine base from the RNA, forming a covalent enzyme-RNA intermediate. The proton acceptor active site deprotonates the incoming PreQ1, allowing a nucleophilic attack on the C1' of the ribose to form the product. After dissociation, two additional enzymatic reactions on the tRNA convert PreQ1 to queuine (Q), resulting in the hypermodified nucleoside queuosine (7-(((4,5-cis-dihydroxy-2-cyclopenten-1-yl)amino)methyl)-7-deazaguanosine). This Brucella melitensis biotype 1 (strain ATCC 23456 / CCUG 17765 / NCTC 10094 / 16M) protein is Queuine tRNA-ribosyltransferase.